A 158-amino-acid polypeptide reads, in one-letter code: 2-C-methyl-D-erythritol 2,4-cyclodiphosphate synthase (158 aa).

2 residues coordinate a divalent metal cation: Asp-8 and His-10. 4-CDP-2-C-methyl-D-erythritol 2-phosphate-binding positions include 8–10 (DVH) and 34–35 (HS). His-42 contributes to the a divalent metal cation binding site. Residues 56 to 58 (DIG), 132 to 135 (TTNE), and Arg-142 contribute to the 4-CDP-2-C-methyl-D-erythritol 2-phosphate site.

This sequence belongs to the IspF family. In terms of assembly, homotrimer. The cofactor is a divalent metal cation.

The enzyme catalyses 4-CDP-2-C-methyl-D-erythritol 2-phosphate = 2-C-methyl-D-erythritol 2,4-cyclic diphosphate + CMP. The protein operates within isoprenoid biosynthesis; isopentenyl diphosphate biosynthesis via DXP pathway; isopentenyl diphosphate from 1-deoxy-D-xylulose 5-phosphate: step 4/6. Functionally, involved in the biosynthesis of isopentenyl diphosphate (IPP) and dimethylallyl diphosphate (DMAPP), two major building blocks of isoprenoid compounds. Catalyzes the conversion of 4-diphosphocytidyl-2-C-methyl-D-erythritol 2-phosphate (CDP-ME2P) to 2-C-methyl-D-erythritol 2,4-cyclodiphosphate (ME-CPP) with a corresponding release of cytidine 5-monophosphate (CMP). This chain is 2-C-methyl-D-erythritol 2,4-cyclodiphosphate synthase, found in Chlorobium phaeobacteroides (strain DSM 266 / SMG 266 / 2430).